The chain runs to 360 residues: Phospho-N-acetylmuramoyl-pentapeptide-transferase (360 aa).

Helical transmembrane passes span 26–46 (AIMSVLTALILSLWMGPRLIA), 70–90 (GTPTMGGIMILAAITITALLW), 94–114 (SNPYIWAVLAVMLGYGVVGFV), 132–152 (WKYFWQSVIALVIAFALYMHG), 168–188 (VMPQLGLLYIVLTYFVIVGTS), 199–219 (GLAIMPTVMVAGGMAFIAWAT), 239–259 (LVVLCTAIVGAGLGFLWFNTY), 263–283 (VFMGDVGSLALGGALGTIAVL), 288–308 (LLLVIMGGVFVMETVSVILQV), and 338–358 (VIVRFWIITLMLVLIALATLK).

This sequence belongs to the glycosyltransferase 4 family. MraY subfamily. It depends on Mg(2+) as a cofactor.

Its subcellular location is the cell inner membrane. The catalysed reaction is UDP-N-acetyl-alpha-D-muramoyl-L-alanyl-gamma-D-glutamyl-meso-2,6-diaminopimeloyl-D-alanyl-D-alanine + di-trans,octa-cis-undecaprenyl phosphate = di-trans,octa-cis-undecaprenyl diphospho-N-acetyl-alpha-D-muramoyl-L-alanyl-D-glutamyl-meso-2,6-diaminopimeloyl-D-alanyl-D-alanine + UMP. Its pathway is cell wall biogenesis; peptidoglycan biosynthesis. Catalyzes the initial step of the lipid cycle reactions in the biosynthesis of the cell wall peptidoglycan: transfers peptidoglycan precursor phospho-MurNAc-pentapeptide from UDP-MurNAc-pentapeptide onto the lipid carrier undecaprenyl phosphate, yielding undecaprenyl-pyrophosphoryl-MurNAc-pentapeptide, known as lipid I. The protein is Phospho-N-acetylmuramoyl-pentapeptide-transferase of Photobacterium profundum (strain SS9).